The chain runs to 500 residues: Cytochrome P450 CYP736A12 (500 aa).

Residues 4-24 form a helical membrane-spanning segment; it reads LAYPLLFVLLGALSWWILPII. Residue C442 coordinates heme.

The protein belongs to the cytochrome P450 family. Requires heme as cofactor.

Its subcellular location is the membrane. Its function is as follows. Probable heme-thiolate monooxygenase. The chain is Cytochrome P450 CYP736A12 from Panax ginseng (Korean ginseng).